Here is a 293-residue protein sequence, read N- to C-terminus: Forkhead box protein N5 (293 aa).

Positions threonine 104 to arginine 152 are disordered. Residues proline 106–serine 119 show a composition bias toward polar residues. Positions arginine 176–leucine 273 form a DNA-binding region, fork-head.

Its subcellular location is the nucleus. The sequence is that of Forkhead box protein N5 from Xenopus tropicalis (Western clawed frog).